The sequence spans 464 residues: Glycine--tRNA ligase (464 aa).

Residues Arg104 and Glu175 each contribute to the substrate site. ATP is bound by residues 207-209 (RNE), 217-222 (FRTREF), 292-293 (EL), and 336-339 (GVNR). 222–226 (FEQME) contacts substrate. Residue 332–336 (EPALG) participates in substrate binding.

Belongs to the class-II aminoacyl-tRNA synthetase family. Homodimer.

The protein localises to the cytoplasm. The catalysed reaction is tRNA(Gly) + glycine + ATP = glycyl-tRNA(Gly) + AMP + diphosphate. Functionally, catalyzes the attachment of glycine to tRNA(Gly). The chain is Glycine--tRNA ligase from Leptospira interrogans serogroup Icterohaemorrhagiae serovar copenhageni (strain Fiocruz L1-130).